The sequence spans 777 residues: MISSFSNGFWSKDYATGVKKLFDCLDNGVEENEQVKNLLKLYKEANEEFGEKLQEITKECLKGKKPENTEDGATSNKAFEGLRSEIANQGKQHIRIAKDLETLIIAPFSKMSIDHSQKLQTSQQVLTNQIKSYEKKYYTLKKTKSAYYNKCRNLEDYEEESKESNETTSEAITDLTTVSSPQQQSLLENDDDLIQLGFMEFRPEELKEVLAQVLQEIPLQDYRVPILGTYPNTCSGNIIVSWLQENLPVPTLVAAEAFGQDLIAQGFLRHMGVGGSFVNSTNFHYQWKDKAFQFAGLNSVDSLVENAKALPLVGEYLSDYISHRKLYSSETQSQRLKREVLDANKIYSESVVDLDKCRTLVEETIADHLQFLQKCETDRVLYYKDFFMDLSTIISNFLPSMKLLADQIVVYQEIIQPESDIRYILESAATGPFLPRVEIYEDYYNDIKDQIFGVDVEFLSHRDKKRVPIIVSTILSYLDLLYPTLASDEVRQNIWLVNSPLSSVHQLREALNHSSSVTKEVLSQYTPSVVIGVLKLYFLELPDSIVPSSAFELIRSIYMNHSNDTPYRLRLLQNLLSQLRRVNLATLSAIITHLNRLITLTPNKETFTINLANSLSLCISRPATWNLGIQHDKHPTKFMEDLLTYGPSIFEELRKLNSSKRVSDRVLYQSSATPRSTDVSPTRPDSISSVRSHTAVESPRSSFEELQPSEIPAESEFTLENVPTSLIRSSYALNTRKTRRNFSHSSASNESAAIFIDQDAKIVNEAVASRDSSLSGS.

Residues 3-420 form the F-BAR domain; the sequence is SSFSNGFWSK…YQEIIQPESD (418 aa). The stretch at 117-172 forms a coiled coil; it reads QKLQTSQQVLTNQIKSYEKKYYTLKKTKSAYYNKCRNLEDYEEESKESNETTSEAI. Residues 213–296 enclose the DEP domain; that stretch reads VLQEIPLQDY…WKDKAFQFAG (84 aa). The Rho-GAP domain maps to 454-650; sequence VDVEFLSHRD…DLLTYGPSIF (197 aa). The interval 667–709 is disordered; the sequence is LYQSSATPRSTDVSPTRPDSISSVRSHTAVESPRSSFEELQPS. The segment covering 668 to 692 has biased composition (polar residues); sequence YQSSATPRSTDVSPTRPDSISSVRS. Residues Ser-676 and Ser-680 each carry the phosphoserine modification. Residue Thr-682 is modified to Phosphothreonine. Ser-686 bears the Phosphoserine mark. Thr-694 carries the phosphothreonine modification. Ser-698 carries the post-translational modification Phosphoserine.

In terms of assembly, interacts with pak1/shk1. In terms of processing, phosphorylated by pak1/shk1.

It localises to the cytoplasm. Acts in signal transduction. Negatively regulates the pak1/shk1 control pathway. The sequence is that of Rho-GTPase-activating protein 8 (rga8) from Schizosaccharomyces pombe (strain 972 / ATCC 24843) (Fission yeast).